The chain runs to 224 residues: 7-cyano-7-deazaguanine synthase 1 (224 aa).

10–20 (LSGGLDSMVCA) is an ATP binding site. Cys-189, Cys-199, Cys-202, and Cys-205 together coordinate Zn(2+).

Belongs to the QueC family. Zn(2+) serves as cofactor.

It catalyses the reaction 7-carboxy-7-deazaguanine + NH4(+) + ATP = 7-cyano-7-deazaguanine + ADP + phosphate + H2O + H(+). Its pathway is purine metabolism; 7-cyano-7-deazaguanine biosynthesis. Catalyzes the ATP-dependent conversion of 7-carboxy-7-deazaguanine (CDG) to 7-cyano-7-deazaguanine (preQ(0)). The polypeptide is 7-cyano-7-deazaguanine synthase 1 (Sphingopyxis alaskensis (strain DSM 13593 / LMG 18877 / RB2256) (Sphingomonas alaskensis)).